The sequence spans 474 residues: Replication factor C large subunit (474 aa).

45–52 serves as a coordination point for ATP; sequence GPPGCGKT. Residues 415-468 are compositionally biased toward basic and acidic residues; sequence DKKTNNKKGKENKTKNTTKKIKEIKETPKKEEVKEPKKQIEKQKSEKKEPKKQM. The interval 415–474 is disordered; the sequence is DKKTNNKKGKENKTKNTTKKIKEIKETPKKEEVKEPKKQIEKQKSEKKEPKKQMTLESFF.

The protein belongs to the activator 1 small subunits family. RfcL subfamily. As to quaternary structure, heteromultimer composed of small subunits (RfcS) and large subunits (RfcL).

In terms of biological role, part of the RFC clamp loader complex which loads the PCNA sliding clamp onto DNA. In Methanococcus aeolicus (strain ATCC BAA-1280 / DSM 17508 / OCM 812 / Nankai-3), this protein is Replication factor C large subunit.